A 467-amino-acid chain; its full sequence is MSLSLWQQCLARLQDELPATEFSMWIRPLQAELSDNTLALYAPNRFVLDWVRDKYLNNINGLLTSFCGADAPQLRFEVGTKPVTQTPQAAVTSNVAAPAQVAQTQPQRAAPSMRSGWDNVPAPAEPTYRSNVNVKHTFDNFVEGKSNQLARAAARQVADNPGGAYNPLFLYGGTGLGKTHLLHAVGNGIMARKPNAKVVYMHSERFVQDMVKALQNNAIEEFKRYYRSVDALLIDDIQFFANKERSQEEFFHTFNALLEGNQQIILTSDRYPKEINGVEDRLKSRFGWGLTVAIEPPELETRVAILMKKADENDIRLPGEVAFFIAKRLRSNVRELEGALNRVIANANFTGRAITIDFVREALRDLLALQEKLVTIDNIQKTVAEYYKIKVADLLSKRRSRSVARPRQMAMALAKELTNHSLPEIGDAFGGRDHTTVLHACRKIEQLREESHDIKEDFSNLIRTLSS.

Residues 1 to 90 form a domain I, interacts with DnaA modulators region; that stretch reads MSLSLWQQCL…KPVTQTPQAA (90 aa). The segment at 91–130 is domain II; sequence VTSNVAAPAQVAQTQPQRAAPSMRSGWDNVPAPAEPTYRS. Residues 131–347 are domain III, AAA+ region; it reads NVNVKHTFDN…GALNRVIANA (217 aa). Residues Gly-175, Gly-177, Lys-178, and Thr-179 each contribute to the ATP site. Residues 348 to 467 form a domain IV, binds dsDNA region; that stretch reads NFTGRAITID…FSNLIRTLSS (120 aa).

It belongs to the DnaA family. Oligomerizes as a right-handed, spiral filament on DNA at oriC.

It localises to the cytoplasm. Plays an essential role in the initiation and regulation of chromosomal replication. ATP-DnaA binds to the origin of replication (oriC) to initiate formation of the DNA replication initiation complex once per cell cycle. Binds the DnaA box (a 9 base pair repeat at the origin) and separates the double-stranded (ds)DNA. Forms a right-handed helical filament on oriC DNA; dsDNA binds to the exterior of the filament while single-stranded (ss)DNA is stabiized in the filament's interior. The ATP-DnaA-oriC complex binds and stabilizes one strand of the AT-rich DNA unwinding element (DUE), permitting loading of DNA polymerase. After initiation quickly degrades to an ADP-DnaA complex that is not apt for DNA replication. Binds acidic phospholipids. The sequence is that of Chromosomal replication initiator protein DnaA from Escherichia coli (strain ATCC 8739 / DSM 1576 / NBRC 3972 / NCIMB 8545 / WDCM 00012 / Crooks).